A 461-amino-acid polypeptide reads, in one-letter code: V-type ATP synthase beta chain (461 aa).

This sequence belongs to the ATPase alpha/beta chains family.

In terms of biological role, produces ATP from ADP in the presence of a proton gradient across the membrane. The V-type beta chain is a regulatory subunit. The chain is V-type ATP synthase beta chain from Clostridium botulinum (strain Langeland / NCTC 10281 / Type F).